The following is a 218-amino-acid chain: Probable transaldolase (218 aa).

The active-site Schiff-base intermediate with substrate is the lysine 83.

The protein belongs to the transaldolase family. Type 3B subfamily.

Its subcellular location is the cytoplasm. The enzyme catalyses D-sedoheptulose 7-phosphate + D-glyceraldehyde 3-phosphate = D-erythrose 4-phosphate + beta-D-fructose 6-phosphate. Its pathway is carbohydrate degradation; pentose phosphate pathway; D-glyceraldehyde 3-phosphate and beta-D-fructose 6-phosphate from D-ribose 5-phosphate and D-xylulose 5-phosphate (non-oxidative stage): step 2/3. Transaldolase is important for the balance of metabolites in the pentose-phosphate pathway. This chain is Probable transaldolase, found in Parvibaculum lavamentivorans (strain DS-1 / DSM 13023 / NCIMB 13966).